Consider the following 264-residue polypeptide: Methionine aminopeptidase (264 aa).

Substrate is bound at residue His-79. A divalent metal cation contacts are provided by Asp-97, Asp-108, and His-171. Residue His-178 participates in substrate binding. The a divalent metal cation site is built by Glu-204 and Glu-235.

Belongs to the peptidase M24A family. Methionine aminopeptidase type 1 subfamily. Monomer. Co(2+) serves as cofactor. It depends on Zn(2+) as a cofactor. Requires Mn(2+) as cofactor. Fe(2+) is required as a cofactor.

It catalyses the reaction Release of N-terminal amino acids, preferentially methionine, from peptides and arylamides.. Removes the N-terminal methionine from nascent proteins. The N-terminal methionine is often cleaved when the second residue in the primary sequence is small and uncharged (Met-Ala-, Cys, Gly, Pro, Ser, Thr, or Val). Requires deformylation of the N(alpha)-formylated initiator methionine before it can be hydrolyzed. In Buchnera aphidicola subsp. Acyrthosiphon pisum (strain APS) (Acyrthosiphon pisum symbiotic bacterium), this protein is Methionine aminopeptidase.